The primary structure comprises 233 residues: Putative N-acetylmannosamine-6-phosphate 2-epimerase (233 aa).

This sequence belongs to the NanE family.

It catalyses the reaction an N-acyl-D-glucosamine 6-phosphate = an N-acyl-D-mannosamine 6-phosphate. Its pathway is amino-sugar metabolism; N-acetylneuraminate degradation; D-fructose 6-phosphate from N-acetylneuraminate: step 3/5. In terms of biological role, converts N-acetylmannosamine-6-phosphate (ManNAc-6-P) to N-acetylglucosamine-6-phosphate (GlcNAc-6-P). This is Putative N-acetylmannosamine-6-phosphate 2-epimerase from Yersinia pseudotuberculosis serotype O:3 (strain YPIII).